Reading from the N-terminus, the 230-residue chain is Phosphatidylserine decarboxylase proenzyme (230 aa).

Residue Ser-186 is the Schiff-base intermediate with substrate; via pyruvic acid of the active site. Ser-186 carries the post-translational modification Pyruvic acid (Ser); by autocatalysis.

The protein belongs to the phosphatidylserine decarboxylase family. PSD-A subfamily. As to quaternary structure, heterodimer of a large membrane-associated beta subunit and a small pyruvoyl-containing alpha subunit. The cofactor is pyruvate. In terms of processing, is synthesized initially as an inactive proenzyme. Formation of the active enzyme involves a self-maturation process in which the active site pyruvoyl group is generated from an internal serine residue via an autocatalytic post-translational modification. Two non-identical subunits are generated from the proenzyme in this reaction, and the pyruvate is formed at the N-terminus of the alpha chain, which is derived from the carboxyl end of the proenzyme. The post-translation cleavage follows an unusual pathway, termed non-hydrolytic serinolysis, in which the side chain hydroxyl group of the serine supplies its oxygen atom to form the C-terminus of the beta chain, while the remainder of the serine residue undergoes an oxidative deamination to produce ammonia and the pyruvoyl prosthetic group on the alpha chain.

The protein resides in the cell membrane. The enzyme catalyses a 1,2-diacyl-sn-glycero-3-phospho-L-serine + H(+) = a 1,2-diacyl-sn-glycero-3-phosphoethanolamine + CO2. The protein operates within phospholipid metabolism; phosphatidylethanolamine biosynthesis; phosphatidylethanolamine from CDP-diacylglycerol: step 2/2. Functionally, catalyzes the formation of phosphatidylethanolamine (PtdEtn) from phosphatidylserine (PtdSer). This chain is Phosphatidylserine decarboxylase proenzyme, found in Wolbachia pipientis wMel.